The chain runs to 147 residues: Flagellar assembly factor FliW (147 aa).

This sequence belongs to the FliW family. As to quaternary structure, interacts with translational regulator CsrA and flagellin(s).

The protein localises to the cytoplasm. Functionally, acts as an anti-CsrA protein, binds CsrA and prevents it from repressing translation of its target genes, one of which is flagellin. Binds to flagellin and participates in the assembly of the flagellum. The protein is Flagellar assembly factor FliW of Treponema denticola (strain ATCC 35405 / DSM 14222 / CIP 103919 / JCM 8153 / KCTC 15104).